We begin with the raw amino-acid sequence, 418 residues long: Tyrosine--tRNA ligase 1 (418 aa).

Y34 contributes to the L-tyrosine binding site. Positions 39 to 48 (PTADSLHIGH) match the 'HIGH' region motif. Positions 169 and 173 each coordinate L-tyrosine. Positions 230–234 (KFGKT) match the 'KMSKS' region motif. K233 lines the ATP pocket. Positions 352–418 (TVLIDLLVES…GKKKYFLIRY (67 aa)) constitute an S4 RNA-binding domain.

It belongs to the class-I aminoacyl-tRNA synthetase family. TyrS type 1 subfamily. As to quaternary structure, homodimer.

The protein resides in the cytoplasm. The catalysed reaction is tRNA(Tyr) + L-tyrosine + ATP = L-tyrosyl-tRNA(Tyr) + AMP + diphosphate + H(+). Its function is as follows. Catalyzes the attachment of tyrosine to tRNA(Tyr) in a two-step reaction: tyrosine is first activated by ATP to form Tyr-AMP and then transferred to the acceptor end of tRNA(Tyr). The sequence is that of Tyrosine--tRNA ligase 1 from Bacillus cereus (strain ATCC 14579 / DSM 31 / CCUG 7414 / JCM 2152 / NBRC 15305 / NCIMB 9373 / NCTC 2599 / NRRL B-3711).